A 116-amino-acid polypeptide reads, in one-letter code: Ribonuclease P protein component 2 (116 aa).

This sequence belongs to the eukaryotic/archaeal RNase P protein component 2 family. In terms of assembly, consists of a catalytic RNA component and at least 4-5 protein subunits.

The protein localises to the cytoplasm. The catalysed reaction is Endonucleolytic cleavage of RNA, removing 5'-extranucleotides from tRNA precursor.. Functionally, part of ribonuclease P, a protein complex that generates mature tRNA molecules by cleaving their 5'-ends. This chain is Ribonuclease P protein component 2, found in Methanosarcina mazei (strain ATCC BAA-159 / DSM 3647 / Goe1 / Go1 / JCM 11833 / OCM 88) (Methanosarcina frisia).